The chain runs to 162 residues: Selenoprotein F (162 aa).

An N-terminal signal peptide occupies residues 1–28; the sequence is MAAEPGGWLGPALGLRLLLATALQMVSA. A non-standard amino acid (selenocysteine) is located at residue U93.

Belongs to the selenoprotein M/F family. In terms of assembly, forms a tight complex with UGGT1/UGCGL1. Interacts with UGGT2/UGCGL2. Interacts with RDH11.

The protein localises to the endoplasmic reticulum lumen. Its function is as follows. May be involved in redox reactions associated with the formation of disulfide bonds. May contribute to the quality control of protein folding in the endoplasmic reticulum. May regulate protein folding by enhancing the catalytic activity of UGGT1/UGCGL1 and UGGT2/UGCGL2. The sequence is that of Selenoprotein F from Sus scrofa (Pig).